We begin with the raw amino-acid sequence, 352 residues long: Anthranilate phosphoribosyltransferase (352 aa).

Residues Gly-96, 99-100 (GS), Ser-104, 106-109 (NIST), 124-132 (KHGNRSVSS), and Ser-136 contribute to the 5-phospho-alpha-D-ribose 1-diphosphate site. Position 96 (Gly-96) interacts with anthranilate. Ser-108 lines the Mg(2+) pocket. Anthranilate is bound at residue Asn-127. Arg-182 is an anthranilate binding site. 2 residues coordinate Mg(2+): Asp-241 and Glu-242.

It belongs to the anthranilate phosphoribosyltransferase family. In terms of assembly, homodimer. It depends on Mg(2+) as a cofactor.

The enzyme catalyses N-(5-phospho-beta-D-ribosyl)anthranilate + diphosphate = 5-phospho-alpha-D-ribose 1-diphosphate + anthranilate. The protein operates within amino-acid biosynthesis; L-tryptophan biosynthesis; L-tryptophan from chorismate: step 2/5. In terms of biological role, catalyzes the transfer of the phosphoribosyl group of 5-phosphorylribose-1-pyrophosphate (PRPP) to anthranilate to yield N-(5'-phosphoribosyl)-anthranilate (PRA). This chain is Anthranilate phosphoribosyltransferase, found in Syntrophotalea carbinolica (strain DSM 2380 / NBRC 103641 / GraBd1) (Pelobacter carbinolicus).